Consider the following 110-residue polypeptide: Small ribosomal subunit protein uS10 (110 aa).

The protein belongs to the universal ribosomal protein uS10 family. In terms of assembly, part of the 30S ribosomal subunit.

Involved in the binding of tRNA to the ribosomes. The polypeptide is Small ribosomal subunit protein uS10 (Coxiella burnetii (strain Dugway 5J108-111)).